The sequence spans 230 residues: Orotidine 5'-phosphate decarboxylase (230 aa).

Substrate is bound by residues Asp10, Lys31, Asp58–Thr67, Thr117, Arg179, Gln188, Gly208, and Arg209. The active-site Proton donor is the Lys60.

The protein belongs to the OMP decarboxylase family. Type 1 subfamily. Homodimer.

The enzyme catalyses orotidine 5'-phosphate + H(+) = UMP + CO2. It functions in the pathway pyrimidine metabolism; UMP biosynthesis via de novo pathway; UMP from orotate: step 2/2. Functionally, catalyzes the decarboxylation of orotidine 5'-monophosphate (OMP) to uridine 5'-monophosphate (UMP). This chain is Orotidine 5'-phosphate decarboxylase, found in Staphylococcus aureus (strain USA300).